The sequence spans 377 residues: Queuine tRNA-ribosyltransferase (377 aa).

Asp-93 (proton acceptor) is an active-site residue. Substrate-binding positions include 93–97 (DSGGF), Asp-147, Gln-191, and Gly-218. Residues 249–255 (GVGTPLD) are RNA binding. Catalysis depends on Asp-268, which acts as the Nucleophile. The tract at residues 273 to 277 (TRNAR) is RNA binding; important for wobble base 34 recognition. Residues Cys-306, Cys-308, Cys-311, and His-337 each contribute to the Zn(2+) site.

It belongs to the queuine tRNA-ribosyltransferase family. In terms of assembly, homodimer. Within each dimer, one monomer is responsible for RNA recognition and catalysis, while the other monomer binds to the replacement base PreQ1. Zn(2+) is required as a cofactor.

It carries out the reaction 7-aminomethyl-7-carbaguanine + guanosine(34) in tRNA = 7-aminomethyl-7-carbaguanosine(34) in tRNA + guanine. Its pathway is tRNA modification; tRNA-queuosine biosynthesis. Functionally, catalyzes the base-exchange of a guanine (G) residue with the queuine precursor 7-aminomethyl-7-deazaguanine (PreQ1) at position 34 (anticodon wobble position) in tRNAs with GU(N) anticodons (tRNA-Asp, -Asn, -His and -Tyr). Catalysis occurs through a double-displacement mechanism. The nucleophile active site attacks the C1' of nucleotide 34 to detach the guanine base from the RNA, forming a covalent enzyme-RNA intermediate. The proton acceptor active site deprotonates the incoming PreQ1, allowing a nucleophilic attack on the C1' of the ribose to form the product. After dissociation, two additional enzymatic reactions on the tRNA convert PreQ1 to queuine (Q), resulting in the hypermodified nucleoside queuosine (7-(((4,5-cis-dihydroxy-2-cyclopenten-1-yl)amino)methyl)-7-deazaguanosine). This Oleidesulfovibrio alaskensis (strain ATCC BAA-1058 / DSM 17464 / G20) (Desulfovibrio alaskensis) protein is Queuine tRNA-ribosyltransferase.